Here is a 380-residue protein sequence, read N- to C-terminus: ER-phagy receptor 1 (380 aa).

In terms of domain architecture, J spans 9-74 (DCYEILQVNH…DKRKWHEKDY (66 aa)). Residues 270 to 294 (IMCMVCNKNFRSQNQLENHENSKKH) form a C2H2-type zinc finger. A disordered region spans residues 307–337 (KHAKEAQKNAESNKQPEDAPSESPYSNKVSS). Serine 344 is modified (phosphoserine). Residues 352–355 (FTFV) carry the AIM motif. Residues 361-367 (EFYTASE) carry the FFAT motif.

As to quaternary structure, interacts (via the AIM motif) with atg8. Interacts (via the FFAT motif) with the vesicle-associated membrane protein-associated protein (VAP) family proteins scs2 and scs22.

It localises to the endoplasmic reticulum. The protein resides in the preautophagosomal structure. Functionally, reticulophagy receptor required for autophagosomal sequestration of endoplasmic reticulum (ER) membranes during ER stress. Confers resistance to ER stress by promoting the autophagic degradation of the ER (ER-phagy or reticulophagy). Acts as a bridging molecule to mediate the association between atg8 on the autophagic membrane and the vesicle-associated membrane protein-associated proteins (VAPs) scs2 and scs22 on the ER. May play a role in meiosis. The protein is ER-phagy receptor 1 of Schizosaccharomyces pombe (strain 972 / ATCC 24843) (Fission yeast).